The following is a 421-amino-acid chain: Testin (421 aa).

One can recognise a PET domain in the interval 92-199; the sequence is MILTNPVPAK…GDVKLPSEMD (108 aa). Residues 135–165 form a disordered region; it reads QPVAGSEGAQYRKKQLAKQLPEHDQDPSKCH. Basic and acidic residues predominate over residues 154–165; it reads LPEHDQDPSKCH. LIM zinc-binding domains follow at residues 234–297, 299–359, and 362–421; these read YSCY…CDSE, PRCA…NHAV, and QGCH…KMMS.

It belongs to the prickle / espinas / testin family. In terms of assembly, interacts via LIM domain 1 with ZYX. Interacts (via LIM domain 3) with ENAH and VASP. Interacts with ALKBH4, talin, actin, alpha-actinin, GRIP1 and PXN. Interacts (via LIM domain 2) with ACTL7A (via N-terminus). Heterodimer with ACTL7A; the heterodimer interacts with ENAH to form a heterotrimer.

The protein resides in the cytoplasm. It is found in the cell junction. It localises to the focal adhesion. Scaffold protein that may play a role in cell adhesion, cell spreading and in the reorganization of the actin cytoskeleton. Plays a role in the regulation of cell proliferation. May act as a tumor suppressor. In Dasypus novemcinctus (Nine-banded armadillo), this protein is Testin (TES).